A 222-amino-acid chain; its full sequence is 2-C-methyl-D-erythritol 4-phosphate cytidylyltransferase (222 aa).

This sequence belongs to the IspD/TarI cytidylyltransferase family. IspD subfamily.

It carries out the reaction 2-C-methyl-D-erythritol 4-phosphate + CTP + H(+) = 4-CDP-2-C-methyl-D-erythritol + diphosphate. It participates in isoprenoid biosynthesis; isopentenyl diphosphate biosynthesis via DXP pathway; isopentenyl diphosphate from 1-deoxy-D-xylulose 5-phosphate: step 2/6. Functionally, catalyzes the formation of 4-diphosphocytidyl-2-C-methyl-D-erythritol from CTP and 2-C-methyl-D-erythritol 4-phosphate (MEP). This Thermotoga petrophila (strain ATCC BAA-488 / DSM 13995 / JCM 10881 / RKU-1) protein is 2-C-methyl-D-erythritol 4-phosphate cytidylyltransferase.